We begin with the raw amino-acid sequence, 475 residues long: GTPase Der (475 aa).

EngA-type G domains are found at residues 2–166 and 213–386; these read LRIA…NIPE and LKIA…ETVS. Residues 8 to 15, 55 to 59, 118 to 121, 219 to 226, 266 to 270, and 331 to 334 contribute to the GTP site; these read GRPNVGKS, DTGGV, NKAD, DTAGL, and NKWD. Positions 387–471 constitute a KH-like domain; it reads RKVPTPVVNK…PFDLEIKEKA (85 aa).

Belongs to the TRAFAC class TrmE-Era-EngA-EngB-Septin-like GTPase superfamily. EngA (Der) GTPase family. In terms of assembly, associates with the 50S ribosomal subunit.

Its function is as follows. GTPase that plays an essential role in the late steps of ribosome biogenesis. The sequence is that of GTPase Der from Chlamydia felis (strain Fe/C-56) (Chlamydophila felis).